We begin with the raw amino-acid sequence, 310 residues long: MSKKIINEVIDILEDKKYTYTMIEYPEHNRKSVDIVLNSKEPTLIRVSEDKVTKEEISDLKKIAVSTLTASLVVTNEEEEDIVSVKADNVFAVSPEGFKKVINGEKIFLYRTRGGIFIKIRNYILKHKREEMGYSIGDVAKFLGVSRKAIYDYEKGDSDVSLEVAEKLIDLFGDDIIGDVIWDSIKGKKEVIKEDITEFSPESFKSKLIYKLKENGLNILSLKLTAADLIVKDNENNRYLVTIENKDYNKSMKKFYEAKKLASYTKSELLIIIRTSKMLKECEDLGYKTYEENDIHSLIDEIKGSNGRQS.

One can recognise an HTH cro/C1-type domain in the interval 125 to 180 (LKHKREEMGYSIGDVAKFLGVSRKAIYDYEKGDSDVSLEVAEKLIDLFGDDIIGDV). The H-T-H motif DNA-binding region spans 136-155 (IGDVAKFLGVSRKAIYDYEK).

The chain is Putative HTH-type transcriptional regulatory protein LS215_1371 from Saccharolobus islandicus (strain L.S.2.15 / Lassen #1) (Sulfolobus islandicus).